The chain runs to 131 residues: Small ribosomal subunit protein eS24 (131 aa).

The residue at position 1 (M1) is an N-acetylmethionine. T9 is subject to Phosphothreonine. A Glycyl lysine isopeptide (Lys-Gly) (interchain with G-Cter in SUMO2) cross-link involves residue K37. Residues 90–100 are compositionally biased toward basic and acidic residues; sequence RLARHGLYEKK. Positions 90–131 are disordered; it reads RLARHGLYEKKKTSRKQRKERKNRMKKVRGTAKANVGAGKKK. Basic residues predominate over residues 101 to 119; the sequence is KTSRKQRKERKNRMKKVRG.

Belongs to the eukaryotic ribosomal protein eS24 family. As to quaternary structure, component of the small ribosomal subunit. Part of the small subunit (SSU) processome, composed of more than 70 proteins and the RNA chaperone small nucleolar RNA (snoRNA) U3.

The protein localises to the cytoplasm. The protein resides in the nucleus. It is found in the nucleolus. Component of the small ribosomal subunit. The ribosome is a large ribonucleoprotein complex responsible for the synthesis of proteins in the cell. Required for processing of pre-rRNA and maturation of 40S ribosomal subunits. Part of the small subunit (SSU) processome, first precursor of the small eukaryotic ribosomal subunit. During the assembly of the SSU processome in the nucleolus, many ribosome biogenesis factors, an RNA chaperone and ribosomal proteins associate with the nascent pre-rRNA and work in concert to generate RNA folding, modifications, rearrangements and cleavage as well as targeted degradation of pre-ribosomal RNA by the RNA exosome. The sequence is that of Small ribosomal subunit protein eS24 (RPS24) from Pongo abelii (Sumatran orangutan).